Consider the following 210-residue polypeptide: Chaperone protein TorD (210 aa).

It belongs to the TorD/DmsD family. TorD subfamily.

Its subcellular location is the cytoplasm. Functionally, involved in the biogenesis of TorA. Acts on TorA before the insertion of the molybdenum cofactor and, as a result, probably favors a conformation of the apoenzyme that is competent for acquiring the cofactor. This chain is Chaperone protein TorD, found in Salmonella newport (strain SL254).